A 671-amino-acid chain; its full sequence is UvrABC system protein B (671 aa).

Residues 26 to 414 form the Helicase ATP-binding domain; the sequence is EGLENGLAHQ…GGDIIEQVVR (389 aa). Residue 39 to 46 coordinates ATP; sequence GVTGSGKT. Positions 92-115 match the Beta-hairpin motif; the sequence is YYDYYQPEAYVPSSDTFIEKDASV. Positions 431 to 593 constitute a Helicase C-terminal domain; it reads QVDDLLSEIR…IIPQGLNKKI (163 aa). In terms of domain architecture, UVR spans 631–666; that stretch reads DQKIRELEAKMYTYAQNLEFEQAAELRDQVHQLRQQ.

The protein belongs to the UvrB family. In terms of assembly, forms a heterotetramer with UvrA during the search for lesions. Interacts with UvrC in an incision complex.

The protein resides in the cytoplasm. In terms of biological role, the UvrABC repair system catalyzes the recognition and processing of DNA lesions. A damage recognition complex composed of 2 UvrA and 2 UvrB subunits scans DNA for abnormalities. Upon binding of the UvrA(2)B(2) complex to a putative damaged site, the DNA wraps around one UvrB monomer. DNA wrap is dependent on ATP binding by UvrB and probably causes local melting of the DNA helix, facilitating insertion of UvrB beta-hairpin between the DNA strands. Then UvrB probes one DNA strand for the presence of a lesion. If a lesion is found the UvrA subunits dissociate and the UvrB-DNA preincision complex is formed. This complex is subsequently bound by UvrC and the second UvrB is released. If no lesion is found, the DNA wraps around the other UvrB subunit that will check the other stand for damage. This Yersinia pestis protein is UvrABC system protein B.